We begin with the raw amino-acid sequence, 399 residues long: Elongation factor Tu (399 aa).

Positions 10–204 (KPHVNIGTIG…AVDASIPEPE (195 aa)) constitute a tr-type G domain. A G1 region spans residues 19–26 (GHVDHGKT). 19-26 (GHVDHGKT) lines the GTP pocket. T26 lines the Mg(2+) pocket. Positions 60–64 (GITIN) are G2. The G3 stretch occupies residues 81-84 (DCPG). Residues 81–85 (DCPGH) and 136–139 (NKCD) each bind GTP. Residues 136-139 (NKCD) are G4. The G5 stretch occupies residues 174–176 (SGL).

Belongs to the TRAFAC class translation factor GTPase superfamily. Classic translation factor GTPase family. EF-Tu/EF-1A subfamily. Monomer.

It is found in the cytoplasm. The enzyme catalyses GTP + H2O = GDP + phosphate + H(+). Functionally, GTP hydrolase that promotes the GTP-dependent binding of aminoacyl-tRNA to the A-site of ribosomes during protein biosynthesis. The sequence is that of Elongation factor Tu from Prochlorococcus marinus (strain AS9601).